Here is a 136-residue protein sequence, read N- to C-terminus: Large ribosomal subunit protein uL16c (136 aa).

Residues Met-1–Lys-20 form a disordered region.

Belongs to the universal ribosomal protein uL16 family. Part of the 50S ribosomal subunit.

It is found in the plastid. The protein resides in the chloroplast. The sequence is that of Large ribosomal subunit protein uL16c from Triticum aestivum (Wheat).